The following is a 248-amino-acid chain: Small ribosomal subunit protein uS3 (248 aa).

The region spanning 38–106 (VREYLVKTLD…QVALNILEVK (69 aa)) is the KH type-2 domain. A compositionally biased stretch (basic and acidic residues) spans 213–230 (ESEINAPAERRGRGDRNG). The tract at residues 213–248 (ESEINAPAERRGRGDRNGRPRRGGQRRQRSEQKQEG) is disordered.

Belongs to the universal ribosomal protein uS3 family. In terms of assembly, part of the 30S ribosomal subunit. Forms a tight complex with proteins S10 and S14.

In terms of biological role, binds the lower part of the 30S subunit head. Binds mRNA in the 70S ribosome, positioning it for translation. This Corynebacterium diphtheriae (strain ATCC 700971 / NCTC 13129 / Biotype gravis) protein is Small ribosomal subunit protein uS3.